The primary structure comprises 619 residues: Probable Xaa-Pro aminopeptidase P (619 aa).

4 residues coordinate Mn(2+): aspartate 416, aspartate 427, glutamate 525, and glutamate 539.

This sequence belongs to the peptidase M24B family. It depends on Mn(2+) as a cofactor.

It carries out the reaction Release of any N-terminal amino acid, including proline, that is linked to proline, even from a dipeptide or tripeptide.. Functionally, catalyzes the removal of a penultimate prolyl residue from the N-termini of peptides. The protein is Probable Xaa-Pro aminopeptidase P (AMPP) of Tuber melanosporum (strain Mel28) (Perigord black truffle).